Reading from the N-terminus, the 225-residue chain is ATP synthase subunit a (225 aa).

Helical transmembrane passes span 18 to 38, 73 to 93, 100 to 120, 126 to 146, 156 to 176, and 187 to 207; these read LSLN…MFWL, ILIS…FPYI, MTLT…FGWI, MFTH…MVLI, GTLA…LTLL, and IMLF…AVAM.

This sequence belongs to the ATPase A chain family. As to quaternary structure, F-type ATPases have 2 components, CF(1) - the catalytic core - and CF(0) - the membrane proton channel. CF(1) has five subunits: alpha(3), beta(3), gamma(1), delta(1), epsilon(1). CF(0) has three main subunits: a, b and c.

The protein resides in the mitochondrion inner membrane. Its function is as follows. Mitochondrial membrane ATP synthase (F(1)F(0) ATP synthase or Complex V) produces ATP from ADP in the presence of a proton gradient across the membrane which is generated by electron transport complexes of the respiratory chain. F-type ATPases consist of two structural domains, F(1) - containing the extramembraneous catalytic core and F(0) - containing the membrane proton channel, linked together by a central stalk and a peripheral stalk. During catalysis, ATP synthesis in the catalytic domain of F(1) is coupled via a rotary mechanism of the central stalk subunits to proton translocation. Key component of the proton channel; it may play a direct role in the translocation of protons across the membrane. This Locusta migratoria (Migratory locust) protein is ATP synthase subunit a (ATP6).